A 757-amino-acid polypeptide reads, in one-letter code: RNA-directed RNA polymerase catalytic subunit (757 aa).

The tract at residues Ser50–Tyr82 is disordered. Polar residues predominate over residues Trp55–Pro64. 2 consecutive short sequence motifs (nuclear localization signal) follow at residues Arg187–Met195 and Arg203–Ser216. Residues Arg249 to Glu256 are promoter-binding site. In terms of domain architecture, RdRp catalytic spans Val286–Tyr483.

It belongs to the influenza viruses polymerase PB1 family. In terms of assembly, influenza RNA polymerase is composed of three subunits: PB1, PB2 and PA. Interacts (via N-terminus) with PA (via C-terminus). Interacts (via C-terminus) with PB2 (via N-terminus); this interaction is essential for transcription initiation. In terms of processing, phosphorylated by host PRKCA.

The protein resides in the host nucleus. It is found in the host cytoplasm. It carries out the reaction RNA(n) + a ribonucleoside 5'-triphosphate = RNA(n+1) + diphosphate. Its function is as follows. RNA-dependent RNA polymerase which is responsible for replication and transcription of virus RNA segments. The transcription of viral mRNAs occurs by a unique mechanism called cap-snatching. 5' methylated caps of cellular mRNAs are cleaved after 10-13 nucleotides by PA. In turn, these short capped RNAs are used as primers by PB1 for transcription of viral mRNAs. During virus replication, PB1 initiates RNA synthesis and copy vRNA into complementary RNA (cRNA) which in turn serves as a template for the production of more vRNAs. The polypeptide is RNA-directed RNA polymerase catalytic subunit (Influenza A virus (strain A/Port Chalmers/1/1973 H3N2)).